The sequence spans 427 residues: MALKSTNGTHAGPTASAASLASLAANISEKAASLSTYLESQGHAQPSFLPGCADPPETEEYLALHTSLTSSLEDLQRLVDGPRRSLRPFIMIGNDLAALQVAFDFGFFQLIPPEGSMDVETLAHKVGIDADRTARVLRMLATHRIFVEPKPGFFAHTAASAVFHDDEELRCAGHYMLDECFKAATACSDCIKASPNDSDSTHSPFNTYFGVPMFSYYEQNPQFAARFAKAMAVDRQIAELRDCFPWGDIKGTVVDVGGGSGHISMALARNFPKLDFIVQDDSEKMLAQGRARNLSDIEGRISFMKHSFFHPQPIGGAGAFFIRQCTHNWCDRDVVKILKSFVPGLENSAPGTPLLINDTVLPVPGSKPLHEERALRQMDMLMFVVLGAKQRTAKEFEALLKEADARYEIRRVHADGSMGLVEVHLNI.

Asp-281 contributes to the S-adenosyl-L-methionine binding site. Residue His-327 is the Proton acceptor of the active site.

The protein belongs to the class I-like SAM-binding methyltransferase superfamily. Cation-independent O-methyltransferase family. COMT subfamily.

Its pathway is phytotoxin biosynthesis. Functionally, O-methyltransferase; part of the gene cluster that mediates the biosynthesis of the phytotoxin solanapyrone, a causal agent of early blight disease of potato and tomato. The prosolanapyrone synthase sol1 is a polyketide synthase that produces the octaketide desmethylprosolanapyrone I via sequential condensations of 7 malonyl-CoA units with one acetyl-CoA unit, and one methylation step. The octaketide backbone is further methylated by the sol2 O-methyltransferase to yield prosolanapyrone I. Prosolanapyrone I is hydroxylated to prosolanapyrone II by the cytochrome P450 monooxygenase sol6. The solanapyrone synthase sol5 then catalyzes the oxidation of prosolanapyrone II and the subsequent Diels Alder cycloisomerization of the product prosolanapyrone III to solanapyrones A and D. Solanapyrones A and D are then converted into solanapyrones B and E, respectively, by the sol3 dehydrogenase. The protein is O-methyltransferase sol2 (sol2) of Alternaria solani.